We begin with the raw amino-acid sequence, 166 residues long: NAD(P)H-quinone oxidoreductase subunit I, chloroplastic (166 aa).

4Fe-4S ferredoxin-type domains are found at residues 55–84 (GRIH…VDWK) and 95–124 (LNYS…MTEE). 8 residues coordinate [4Fe-4S] cluster: Cys-64, Cys-67, Cys-70, Cys-74, Cys-104, Cys-107, Cys-110, and Cys-114.

Belongs to the complex I 23 kDa subunit family. In terms of assembly, NDH is composed of at least 16 different subunits, 5 of which are encoded in the nucleus. Requires [4Fe-4S] cluster as cofactor.

The protein localises to the plastid. It is found in the chloroplast thylakoid membrane. The enzyme catalyses a plastoquinone + NADH + (n+1) H(+)(in) = a plastoquinol + NAD(+) + n H(+)(out). It carries out the reaction a plastoquinone + NADPH + (n+1) H(+)(in) = a plastoquinol + NADP(+) + n H(+)(out). Functionally, NDH shuttles electrons from NAD(P)H:plastoquinone, via FMN and iron-sulfur (Fe-S) centers, to quinones in the photosynthetic chain and possibly in a chloroplast respiratory chain. The immediate electron acceptor for the enzyme in this species is believed to be plastoquinone. Couples the redox reaction to proton translocation, and thus conserves the redox energy in a proton gradient. In Laphamia lindheimeri (Lindheimer's rockdaisy), this protein is NAD(P)H-quinone oxidoreductase subunit I, chloroplastic.